The chain runs to 506 residues: 2,3-bisphosphoglycerate-independent phosphoglycerate mutase (506 aa).

Positions 13 and 63 each coordinate Mn(2+). Catalysis depends on Ser-63, which acts as the Phosphoserine intermediate. Substrate is bound by residues His-124, 153 to 154 (RD), Arg-183, Arg-189, 254 to 257 (RADR), and Lys-330. Asp-396, His-400, Asp-437, His-438, and His-456 together coordinate Mn(2+).

This sequence belongs to the BPG-independent phosphoglycerate mutase family. As to quaternary structure, monomer. The cofactor is Mn(2+).

The enzyme catalyses (2R)-2-phosphoglycerate = (2R)-3-phosphoglycerate. The protein operates within carbohydrate degradation; glycolysis; pyruvate from D-glyceraldehyde 3-phosphate: step 3/5. Catalyzes the interconversion of 2-phosphoglycerate and 3-phosphoglycerate. This is 2,3-bisphosphoglycerate-independent phosphoglycerate mutase from Cereibacter sphaeroides (strain ATCC 17023 / DSM 158 / JCM 6121 / CCUG 31486 / LMG 2827 / NBRC 12203 / NCIMB 8253 / ATH 2.4.1.) (Rhodobacter sphaeroides).